The following is a 278-amino-acid chain: Small ribosomal subunit biogenesis GTPase RsgA (278 aa).

In terms of domain architecture, CP-type G spans 62-218 (KNELTRPRVA…ICDTPGFNVI (157 aa)). GTP-binding positions include 112–115 (TKTD) and 162–170 (GQSGVGKSS). The Zn(2+) site is built by Cys-241, Cys-246, His-248, and Cys-254.

The protein belongs to the TRAFAC class YlqF/YawG GTPase family. RsgA subfamily. Monomer. Associates with 30S ribosomal subunit, binds 16S rRNA. The cofactor is Zn(2+).

The protein localises to the cytoplasm. Functionally, one of several proteins that assist in the late maturation steps of the functional core of the 30S ribosomal subunit. Helps release RbfA from mature subunits. May play a role in the assembly of ribosomal proteins into the subunit. Circularly permuted GTPase that catalyzes slow GTP hydrolysis, GTPase activity is stimulated by the 30S ribosomal subunit. The polypeptide is Small ribosomal subunit biogenesis GTPase RsgA (Mycoplasma genitalium (strain ATCC 33530 / DSM 19775 / NCTC 10195 / G37) (Mycoplasmoides genitalium)).